A 273-amino-acid chain; its full sequence is Putative ankyrin repeat protein RBE_0317 (273 aa).

ANK repeat units follow at residues 31-60 (LGKE…DFYS), 93-123 (NGNT…EVNT), 127-157 (GGNS…NVNE), 161-191 (YGDT…DVNE), and 195-225 (QGET…DTKQ).

The chain is Putative ankyrin repeat protein RBE_0317 from Rickettsia bellii (strain RML369-C).